Reading from the N-terminus, the 339-residue chain is Type IV secretion system protein PtlH homolog (339 aa).

This sequence belongs to the GSP E family.

The sequence is that of Type IV secretion system protein PtlH homolog (ptlH) from Bordetella parapertussis (strain 12822 / ATCC BAA-587 / NCTC 13253).